The following is a 524-amino-acid chain: Unconventional prefoldin RPB5 interactor (524 aa).

3 disordered regions span residues 1–20 (MEAP…LRAP), 284–320 (SVNG…EDNS), and 335–373 (VRIN…ELPM). Acidic residues predominate over residues 296–307 (DDGDNNDDGGDS). Phosphoserine; by RPS6KB1 is present on Ser361. At Ser431 the chain carries Phosphoserine.

The protein belongs to the RNA polymerase II subunit 5-mediating protein family. In terms of assembly, homodimer. Component of the PAQosome complex which is responsible for the biogenesis of several protein complexes and which consists of R2TP complex members RUVBL1, RUVBL2, RPAP3 and PIH1D1, URI complex members PFDN2, PFDN6, PDRG1, UXT and URI1 as well as ASDURF, POLR2E and DNAAF10/WDR92. Interacts with POLR2E/RPB5, RUVBL2 and RUVBL1. Interacts with PFDN2, PFDN4 and STAP1; the interactions are phosphorylation-dependent and occur in a growth-dependent manner in the mitochondrion. Interacts with UXT. Interacts with PPP1CC; the interaction is phosphorylation-dependent and occurs in a growth factor-dependent manner. Interacts (via the middle C-terminal region) with GTF2F1 and GTF2F2. Interacts with DMAP1. Interacts with TSC1 and TSC2. Interacts with PRPF8 and EFTUD2 in a ZNHIT2-dependent manner. Post-translationally, phosphorylated. Phosphorylation occurs essentially on serine residues. Phosphorylation occurs in response to androgen treatment in prostate cancer cells in a mTOR-dependent manner. Phosphorylated; hyperhosphorylated in mitochondria in a mTORC-dependent signaling pathway. Phosphorylated at Ser-361 by RPS6KB1 in a growth factor- and rapamycin-dependent manner. S6K1-mediated mitochondrial phosphorylation at Ser-361 disrupts the URI1-PPP1CC complex in the mitochondrion, relieves PPP1CC phosphatase inhibition activity and hence engages a negative feedback diminishing RPS6KB1 kinase activity, preventing sustained S6K1-dependent signaling.

It is found in the nucleus. Its subcellular location is the cytoplasm. The protein localises to the mitochondrion. The protein resides in the cell projection. It localises to the dendrite. Its function is as follows. Involved in gene transcription regulation. Acts as a transcriptional repressor in concert with the corepressor UXT to regulate androgen receptor (AR) transcription. May act as a tumor suppressor to repress AR-mediated gene transcription and to inhibit anchorage-independent growth in prostate cancer cells. Required for cell survival in ovarian cancer cells. Together with UXT, associates with chromatin to the NKX3-1 promoter region. In terms of biological role, plays a central role in maintaining S6K1 signaling and BAD phosphorylation under normal growth conditions thereby protecting cells from potential deleterious effects of sustained S6K1 signaling. The URI1-PPP1CC complex acts as a central component of a negative feedback mechanism that counteracts excessive S6K1 survival signaling to BAD in response to growth factors. Mediates inhibition of PPP1CC phosphatase activity in mitochondria. Coordinates the regulation of nutrient-sensitive gene expression availability in a mTOR-dependent manner. Seems to be a scaffolding protein able to assemble a prefoldin-like complex that contains PFDs and proteins with roles in transcription and ubiquitination. The polypeptide is Unconventional prefoldin RPB5 interactor (URI1) (Bos taurus (Bovine)).